Consider the following 321-residue polypeptide: MNVEAVQQYQHRTVLLEEAVDALALDGERANGMYVDGTFGRGGHSRLILQRLGENGCLLAFDKDTQAIANAATIEDKRFAIVHDSFATLSTALAERGIAQVNGVLLDLGISSPQVDDAARGFSFRADGPLDMRMDTTRGISAAEWLATETEQKIEKVIREYGEERFAFQIAKAIVAGRAVQPISSTRQLAEIVARAVKTREKGKDPATRTFQAIRIFINQELEELEVVLNEAYRHLAPHGRLVVISFHSLEDRIVKQFMASKANVPQPDRRLPIRAVDLPQPEMKLIARIKPSAAEISANPRARSAVMRVAERLPTPGAAS.

Residues Gly-42–His-44, Asp-62, Phe-86, Asp-107, and Gln-114 contribute to the S-adenosyl-L-methionine site.

This sequence belongs to the methyltransferase superfamily. RsmH family.

It localises to the cytoplasm. It catalyses the reaction cytidine(1402) in 16S rRNA + S-adenosyl-L-methionine = N(4)-methylcytidine(1402) in 16S rRNA + S-adenosyl-L-homocysteine + H(+). Functionally, specifically methylates the N4 position of cytidine in position 1402 (C1402) of 16S rRNA. This chain is Ribosomal RNA small subunit methyltransferase H, found in Herminiimonas arsenicoxydans.